The chain runs to 438 residues: V-type ATP synthase beta chain (438 aa).

Belongs to the ATPase alpha/beta chains family.

In terms of biological role, produces ATP from ADP in the presence of a proton gradient across the membrane. The V-type beta chain is a regulatory subunit. This chain is V-type ATP synthase beta chain (atpB), found in Chlamydia pneumoniae (Chlamydophila pneumoniae).